The following is a 1357-amino-acid chain: Vascular endothelial growth factor receptor 3 (1357 aa).

The first 24 residues, 1–24 (MKRDFTFFCRIWIGIPFFSGLVNG), serve as a signal peptide directing secretion. Ig-like C2-type domains lie at 25 to 121 (FSMS…YYRC), 138 to 244 (IFVF…VQVI), 255 to 343 (PEDS…RELT), 352 to 442 (PFIS…LNFT), 453 to 583 (EKEA…TTIP), 583 to 690 (PEGF…HRKY), and 699 to 785 (PRYR…ATVS). Residues 25 to 796 (FSMSPPTLDN…IGSDDKTNVE (772 aa)) are Extracellular-facing. N44, N48, N114, N216, and N271 each carry an N-linked (GlcNAc...) asparagine glycan. 2 disulfides stabilise this stretch: C51-C121 and C173-C225. The cysteines at positions 272 and 331 are disulfide-linked. N360, N400, and N440 each carry an N-linked (GlcNAc...) asparagine glycan. Intrachain disulfides connect C473/C562, C493/C514, and C606/C674. N-linked (GlcNAc...) asparagine glycans are attached at residues N553, N610, N660, N707, N711, and N751. C720 and C772 form a disulfide bridge. A helical membrane pass occupies residues 797-817 (IVILIGTGVIAIFFWVLLLVI). Residues 818-1357 (FCNVKRVNPA…DYFSSSDQAV (540 aa)) lie on the Cytoplasmic side of the membrane. In terms of domain architecture, Protein kinase spans 866 to 1181 (LRLGKVLGHG…ALVEILGDLL (316 aa)). Residues 872–880 (LGHGAFGKV) and K900 contribute to the ATP site. Residues 978-1007 (QSQVRRMIEAGQASQSEHQPSTSSTNPPRV) are disordered. Residues 989–1005 (QASQSEHQPSTSSTNPP) are compositionally biased toward polar residues. The Proton acceptor role is filled by D1045. A phosphotyrosine; by autocatalysis mark is found at Y1071 and Y1076. The tract at residues 1192–1212 (NVSQSSEDDGFSQASSRPPSQ) is disordered. 4 positions are modified to phosphotyrosine; by autocatalysis: Y1226, Y1227, Y1334, and Y1338.

The protein belongs to the protein kinase superfamily. Tyr protein kinase family. CSF-1/PDGF receptor subfamily. As to quaternary structure, interacts with vegfc and vegfd. Monomer in the absence of bound vegfc or vegfd. Homodimer in the presence of bound vegfc or vegfd. In terms of processing, autophosphorylated on tyrosine residues upon ligand binding. Autophosphorylation occurs in trans, i.e. one subunit of the dimeric receptor phosphorylates tyrosine residues on the other subunit.

Its subcellular location is the cell membrane. The protein resides in the cytoplasm. The protein localises to the nucleus. The enzyme catalyses L-tyrosyl-[protein] + ATP = O-phospho-L-tyrosyl-[protein] + ADP + H(+). With respect to regulation, present in an inactive conformation in the absence of bound ligand. Binding of vegfc or vegfd leads to dimerization and activation by autophosphorylation on tyrosine residues. Functionally, tyrosine-protein kinase that acts as a cell-surface receptor for vegf or vegfc. Combinations of multiple VEGF receptors are required for development of different blood vessel types in the embryo. Involved in angiogenesis, specifically in VEGF-induced sprouting of new blood vessels, but not required for proper vasculogenesis or hematopoiesis. In Danio rerio (Zebrafish), this protein is Vascular endothelial growth factor receptor 3 (flt4).